Reading from the N-terminus, the 523-residue chain is Acetyl-CoA hydrolase (523 aa).

277–281 (GIGNI) lines the CoA pocket. The 5-glutamyl coenzyme A thioester intermediate role is filled by E302. Residues N392 and G396 each contribute to the CoA site.

The protein belongs to the acetyl-CoA hydrolase/transferase family.

It localises to the cytoplasm. The enzyme catalyses acetyl-CoA + H2O = acetate + CoA + H(+). In terms of biological role, presumably involved in regulating the intracellular acetyl-CoA pool for fatty acid and cholesterol synthesis and fatty acid oxidation. The protein is Acetyl-CoA hydrolase (ACH1) of Kluyveromyces lactis (strain ATCC 8585 / CBS 2359 / DSM 70799 / NBRC 1267 / NRRL Y-1140 / WM37) (Yeast).